The primary structure comprises 289 residues: Homeobox protein Nkx-2.6 (289 aa).

2 disordered regions span residues 75-125 and 259-289; these read GSNP…PQRK and TPLA…VTAW. The homeobox DNA-binding region spans 123–182; the sequence is QRKSRVLFSQAQVLALERRFKQQRYLTAPEREHLASALQLTSTQVKIWFQNRRYKSKSQR. Residues 261–274 show a composition bias toward polar residues; that stretch reads LASSGFSPGGQSAA.

Belongs to the NK-2 homeobox family. As to expression, not detected in any neonate or adult tissues.

It is found in the nucleus. In terms of biological role, acts as a transcriptional activator. In conjunction with NKX2-5, may play a role in both pharyngeal and cardiac embryonic development. The protein is Homeobox protein Nkx-2.6 (Nkx2-6) of Mus musculus (Mouse).